The sequence spans 316 residues: Probable cobalamin biosynthesis protein CobD (316 aa).

5 consecutive transmembrane segments (helical) span residues 1–21 (MITE…DIVL), 50–70 (ISGM…GFAL), 89–109 (ILAL…KSLI), 165–185 (PLFY…ALAF), and 294–314 (ISLI…LLIL).

The protein belongs to the CobD/CbiB family.

The protein resides in the cell membrane. It participates in cofactor biosynthesis; adenosylcobalamin biosynthesis. Its function is as follows. Converts cobyric acid to cobinamide by the addition of aminopropanol on the F carboxylic group. This chain is Probable cobalamin biosynthesis protein CobD, found in Methanothrix thermoacetophila (strain DSM 6194 / JCM 14653 / NBRC 101360 / PT) (Methanosaeta thermophila).